Consider the following 244-residue polypeptide: Phosphoadenosine 5'-phosphosulfate reductase (244 aa).

Residue Cys239 is the Nucleophile; cysteine thiosulfonate intermediate of the active site.

Belongs to the PAPS reductase family. CysH subfamily.

The protein localises to the cytoplasm. The catalysed reaction is [thioredoxin]-disulfide + sulfite + adenosine 3',5'-bisphosphate + 2 H(+) = [thioredoxin]-dithiol + 3'-phosphoadenylyl sulfate. Its pathway is sulfur metabolism; hydrogen sulfide biosynthesis; sulfite from sulfate: step 3/3. Functionally, catalyzes the formation of sulfite from phosphoadenosine 5'-phosphosulfate (PAPS) using thioredoxin as an electron donor. This chain is Phosphoadenosine 5'-phosphosulfate reductase, found in Escherichia coli O8 (strain IAI1).